The primary structure comprises 468 residues: Eukaryotic translation initiation factor 3 subunit M (468 aa).

The tract at residues 42 to 61 is disordered; it reads PLIEPLRQQEQSEEEPDRKQ. The region spanning 206–377 is the PCI domain; the sequence is DLELAQTHVV…SEFLVHRATY (172 aa). The disordered stretch occupies residues 418-468; that stretch reads MQAAAEETGQGKSGDKGAKGGDRRRNPQQQQQSQPSQPQQAREVELVGGAE. Positions 430–442 are enriched in basic and acidic residues; it reads SGDKGAKGGDRRR. The segment covering 444–457 has biased composition (low complexity); it reads PQQQQQSQPSQPQQ.

Belongs to the eIF-3 subunit M family. Component of the eukaryotic translation initiation factor 3 (eIF-3) complex.

The protein resides in the cytoplasm. Component of the eukaryotic translation initiation factor 3 (eIF-3) complex, which is involved in protein synthesis of a specialized repertoire of mRNAs and, together with other initiation factors, stimulates binding of mRNA and methionyl-tRNAi to the 40S ribosome. The eIF-3 complex specifically targets and initiates translation of a subset of mRNAs involved in cell proliferation. This is Eukaryotic translation initiation factor 3 subunit M from Neosartorya fischeri (strain ATCC 1020 / DSM 3700 / CBS 544.65 / FGSC A1164 / JCM 1740 / NRRL 181 / WB 181) (Aspergillus fischerianus).